A 213-amino-acid chain; its full sequence is MKAYQREFIEFALEKEVLKFGEFTLKSGRKSPYFFNAGLFNTGRDLARLGRFYAAALADSGIEYDVLFGPAYKGIPIATTTAVALADHHDTDKPYCFNRKEAKDHGEGGNLVGSALEGRIMLVDDVITAGTAIRESMEIIQANGADLAGVLVAIDRQEKGKGELSAIQEVERDFNCSIISIVSLTDLISFLEEKGDNAEQLEAVKAYRAEFGI.

Lys26 serves as a coordination point for 5-phospho-alpha-D-ribose 1-diphosphate. 34-35 (FF) contacts orotate. Residues 72–73 (YK), Arg99, Lys100, Lys103, His105, and 124–132 (DDVITAGTA) each bind 5-phospho-alpha-D-ribose 1-diphosphate. Positions 128 and 156 each coordinate orotate.

Belongs to the purine/pyrimidine phosphoribosyltransferase family. PyrE subfamily. Homodimer. It depends on Mg(2+) as a cofactor.

The enzyme catalyses orotidine 5'-phosphate + diphosphate = orotate + 5-phospho-alpha-D-ribose 1-diphosphate. It participates in pyrimidine metabolism; UMP biosynthesis via de novo pathway; UMP from orotate: step 1/2. Its function is as follows. Catalyzes the transfer of a ribosyl phosphate group from 5-phosphoribose 1-diphosphate to orotate, leading to the formation of orotidine monophosphate (OMP). This Aliivibrio fischeri (strain MJ11) (Vibrio fischeri) protein is Orotate phosphoribosyltransferase.